A 215-amino-acid polypeptide reads, in one-letter code: Protein-L-isoaspartate O-methyltransferase (215 aa).

Residue Ser62 is part of the active site.

Belongs to the methyltransferase superfamily. L-isoaspartyl/D-aspartyl protein methyltransferase family.

It localises to the cytoplasm. It carries out the reaction [protein]-L-isoaspartate + S-adenosyl-L-methionine = [protein]-L-isoaspartate alpha-methyl ester + S-adenosyl-L-homocysteine. Functionally, catalyzes the methyl esterification of L-isoaspartyl residues in peptides and proteins that result from spontaneous decomposition of normal L-aspartyl and L-asparaginyl residues. It plays a role in the repair and/or degradation of damaged proteins. The chain is Protein-L-isoaspartate O-methyltransferase from Bradyrhizobium sp. (strain BTAi1 / ATCC BAA-1182).